The following is a 493-amino-acid chain: Glycerol kinase (493 aa).

Threonine 12 serves as a coordination point for ADP. The ATP site is built by threonine 12, threonine 13, and serine 14. Threonine 12 lines the sn-glycerol 3-phosphate pocket. Arginine 16 lines the ADP pocket. Positions 82, 83, 132, and 239 each coordinate sn-glycerol 3-phosphate. Residues arginine 82, glutamate 83, tyrosine 132, aspartate 239, and glutamine 240 each coordinate glycerol. Residues threonine 261 and glycine 303 each coordinate ADP. Positions 261, 303, 307, and 402 each coordinate ATP. ADP is bound by residues glycine 402 and asparagine 406.

It belongs to the FGGY kinase family.

It carries out the reaction glycerol + ATP = sn-glycerol 3-phosphate + ADP + H(+). It participates in polyol metabolism; glycerol degradation via glycerol kinase pathway; sn-glycerol 3-phosphate from glycerol: step 1/1. In terms of biological role, key enzyme in the regulation of glycerol uptake and metabolism. Catalyzes the phosphorylation of glycerol to yield sn-glycerol 3-phosphate. This is Glycerol kinase from Thermococcus onnurineus (strain NA1).